Consider the following 1291-residue polypeptide: Cytoplasmic FMR1-interacting protein (1291 aa).

The interval 1269–1291 is disordered; it reads HPSVISSSSHYQDPQKLRQSMNN. Residues 1271–1291 are compositionally biased toward polar residues; that stretch reads SVISSSSHYQDPQKLRQSMNN.

This sequence belongs to the CYFIP family. Interacts with Fmr1 and Rac1. Component of the WAVE complex composed of Hem/Kette, Scar/Wave and Cyfip where it binds through its C-terminus directly to Hem.

The protein localises to the cytoplasm. Plays a role in guidance and morphology of central and peripheral axons and in synaptic morphology. Also required for formation of cell membrane protrusions and for bristle development. This chain is Cytoplasmic FMR1-interacting protein, found in Drosophila pseudoobscura pseudoobscura (Fruit fly).